The primary structure comprises 122 residues: Large ribosomal subunit protein uL14 (122 aa).

Belongs to the universal ribosomal protein uL14 family. As to quaternary structure, part of the 50S ribosomal subunit. Forms a cluster with proteins L3 and L19. In the 70S ribosome, L14 and L19 interact and together make contacts with the 16S rRNA in bridges B5 and B8.

Binds to 23S rRNA. Forms part of two intersubunit bridges in the 70S ribosome. The sequence is that of Large ribosomal subunit protein uL14 from Xanthomonas axonopodis pv. citri (strain 306).